A 1168-amino-acid polypeptide reads, in one-letter code: Homeodomain-interacting protein kinase 2 (1168 aa).

A Phosphoserine modification is found at Ser16. A Glycyl lysine isopeptide (Lys-Gly) (interchain with G-Cter in SUMO); alternate cross-link involves residue Lys32. Residue Lys32 forms a Glycyl lysine isopeptide (Lys-Gly) (interchain with G-Cter in SUMO2); alternate linkage. The tract at residues 97 to 230 is transcriptional corepression; the sequence is SASSTSVTGQ…TNEIVAIKIL (134 aa). A phosphoserine mark is found at Ser118 and Ser135. Thr141 is subject to Phosphothreonine. An interaction with DAXX region spans residues 189 to 520; sequence HEVLCSMTNT…DADKRITPIE (332 aa). Residues 199–527 form the Protein kinase domain; sequence YEVLEFLGRG…PIETLNHPFV (329 aa). ATP contacts are provided by residues 205 to 213 and Lys228; that span reads LGRGTFGQV. Thr252 and Thr273 each carry phosphothreonine. Asp324 (proton acceptor) is an active-site residue. Tyr361 is modified (phosphotyrosine). Ser441 carries the phosphoserine modification. Phosphothreonine occurs at positions 482, 517, and 566. Residues 539–816 form an interaction with SKI and SMAD1 region; that stretch reads THVKSCFQNM…KENTPPRCAM (278 aa). The interval 595-772 is interaction with DAZAP2; sequence PSAASMAAVA…MRQQPTSTTS (178 aa). 2 positions are modified to phosphoserine: Ser607 and Ser641. At Thr660 the chain carries Phosphothreonine. Positions 724-869 are interaction with POU4F1; the sequence is RNTHAHGSHY…ITISSDTDEE (146 aa). Residues 746-848 form an interaction with CTBP1 region; it reads HVTLPAAQPL…TRERQRQTIV (103 aa). Residues 759–869 form an interaction with HMGA1 region; sequence VAHVMRQQPT…ITISSDTDEE (111 aa). A disordered region spans residues 764–820; that stretch reads RQQPTSTTSSRKSKQHQPSMRNVSTCEVTSSQSTSSPQRSKRVKENTPPRCAMVHSS. The span at 765–791 shows a compositional bias: polar residues; that stretch reads QQPTSTTSSRKSKQHQPSMRNVSTCEV. A Nuclear localization signal 1 (NLS1) motif is present at residues 774 to 777; that stretch reads RKSK. Residues Ser787 and Ser799 each carry the phosphoserine modification. The span at 792-801 shows a compositional bias: low complexity; that stretch reads TSSQSTSSPQ. The Nuclear localization signal 2 (NLS2) motif lies at 804 to 807; it reads KRVK. The interval 812–907 is interaction with TP53 and TP73; sequence PRCAMVHSSP…YSDSSSNTSP (96 aa). The interval 845-879 is interaction with UBE2I; the sequence is QTIVIPDTPSPTVSVITISSDTDEEEEQKHAPTST. The localization to nuclear speckles stretch occupies residues 845 to 952; that stretch reads QTIVIPDTPS…PLKTQASEVL (108 aa). The tract at residues 845 to 952 is required for localization to nuclear speckles; sequence QTIVIPDTPS…PLKTQASEVL (108 aa). Residues 854–876 form an interaction with UBL1 region; it reads SPTVSVITISSDTDEEEEQKHAP. An SUMO interaction motifs (SIM); required for nuclear localization and kinase activity region spans residues 856–880; that stretch reads TVSVITISSDTDEEEEQKHAPTSTV. Residues 894–936 are disordered; sequence HDSPYSDSSSNTSPYSVQQRTGHNGTNTLDTKGALENHCTGNP. Residues 895–909 show a composition bias toward low complexity; that stretch reads DSPYSDSSSNTSPYS. At Ser906 the chain carries Phosphoserine. The interaction with AXIN1 stretch occupies residues 907 to 1022; the sequence is PYSVQQRTGH…LSQAQPHMAT (116 aa). Residues 910–923 are compositionally biased toward polar residues; the sequence is VQQRTGHNGTNTLD. Glycyl lysine isopeptide (Lys-Gly) (interchain with G-Cter in SUMO2) cross-links involve residues Lys925 and Lys945. The tract at residues 956–1168 is autoinhibitory domain (AID); sequence DSLGPAVSTG…PAKVNQYPYI (213 aa). The disordered stretch occupies residues 960 to 1030; it reads PAVSTGHHSS…ATDRTGSHRR (71 aa). Ser963 is subject to Phosphoserine. Low complexity-rich tracts occupy residues 965-991 and 998-1018; these read GHHSSSFKCKSSSTVTSTSGHSSGSSS and QQRPGPHFQQQQPLNLSQAQP. Phosphoserine is present on residues Ser1014, Ser1125, and Ser1158. Lys1161 participates in a covalent cross-link: Glycyl lysine isopeptide (Lys-Gly) (interchain with G-Cter in SUMO).

Belongs to the protein kinase superfamily. CMGC Ser/Thr protein kinase family. HIPK subfamily. As to quaternary structure, interacts with CREB1, SIAH1, WSB1, CBX4, TRADD, p53/TP53, TP73, TP63, CREBBP, DAXX, P53DINP1, SKI, SMAD1, SMAD2 and SMAD3, but not SMAD4. Interacts with ATF1, PML, RUNX1, EP300, NKX1-2, NKX2-5, UBE2I, HMGA1, CTBP1, AXIN1, NLK, MYB, POU4F1, POU4F2, POU4F3, UBE2I, UBL1 and ZBTB4. Probably part of a complex consisting of p53/TP53, HIPK2 and AXIN1. Interacts with SP100; positively regulates TP53-dependent transcription. Interacts with DAZAP2; the interaction results in phosphorylation of DAZAP2 which causes localization of DAZAP2 to the nucleus, reduces interaction of DAZAP2 with HIPK2 and prevents DAZAP2-dependent degradation of HIPK2. Interacts with SIAH1; the interaction is promoted by DAZAP2 and results in SIAH1-mediated ubiquitination and subsequent proteasomal degradation of HIPK2. In terms of processing, autophosphorylation at Tyr-361 in the activation loop activates the kinase and promotes nuclear localization. Post-translationally, sumoylated. When conjugated it is directed to nuclear speckles. Desumoylated by SENP1. Sumoylation on Lys-32 is promoted by the E3 SUMO-protein ligase CBX4. Ubiquitinated by FBXO3, WSB1 and SIAH1, leading to rapid proteasome-dependent degradation. The degradation mediated by FBXO3, but not ubiquitination, is prevented in the presence of PML. The degradation mediated by WSB1 and SIAH1 is reversibly reduced upon DNA damage. In terms of processing, cleaved at Asp-895 and Asp-956 by CASP6 in a p53/TP53-dependent manner. The cleaved form lacks the autoinhibitory C-terminal domain (AID), resulting in a hyperactive kinase, which potentiates p53/TP53 Ser-46 phosphorylation and subsequent activation of the cell death machinery.

Its subcellular location is the nucleus. The protein resides in the PML body. It localises to the cytoplasm. It catalyses the reaction L-seryl-[protein] + ATP = O-phospho-L-seryl-[protein] + ADP + H(+). It carries out the reaction L-threonyl-[protein] + ATP = O-phospho-L-threonyl-[protein] + ADP + H(+). In terms of biological role, serine/threonine-protein kinase involved in transcription regulation, p53/TP53-mediated cellular apoptosis and regulation of the cell cycle. Acts as a corepressor of several transcription factors, including SMAD1 and POU4F1/Brn3a and probably NK homeodomain transcription factors. Phosphorylates PDX1, ATF1, PML, p53/TP53, CREB1, CTBP1, CBX4, RUNX1, EP300, CTNNB1, HMGA1, ZBTB4 and DAZAP2. Inhibits cell growth and promotes apoptosis through the activation of p53/TP53 both at the transcription level and at the protein level (by phosphorylation and indirect acetylation). The phosphorylation of p53/TP53 may be mediated by a p53/TP53-HIPK2-AXIN1 complex. Involved in the response to hypoxia by acting as a transcriptional co-suppressor of HIF1A. Mediates transcriptional activation of TP73. In response to TGFB, cooperates with DAXX to activate JNK. Negative regulator through phosphorylation and subsequent proteasomal degradation of CTNNB1 and the antiapoptotic factor CTBP1. In the Wnt/beta-catenin signaling pathway acts as an intermediate kinase between MAP3K7/TAK1 and NLK to promote the proteasomal degradation of MYB. Phosphorylates CBX4 upon DNA damage and promotes its E3 SUMO-protein ligase activity. Activates CREB1 and ATF1 transcription factors by phosphorylation in response to genotoxic stress. In response to DNA damage, stabilizes PML by phosphorylation. PML, HIPK2 and FBXO3 may act synergically to activate p53/TP53-dependent transactivation. Promotes angiogenesis, and is involved in erythroid differentiation, especially during fetal liver erythropoiesis. Phosphorylation of RUNX1 and EP300 stimulates EP300 transcription regulation activity. Triggers ZBTB4 protein degradation in response to DNA damage. In response to DNA damage, phosphorylates DAZAP2 which localizes DAZAP2 to the nucleus, reduces interaction of DAZAP2 with HIPK2 and prevents DAZAP2-dependent ubiquitination of HIPK2 by E3 ubiquitin-protein ligase SIAH1 and subsequent proteasomal degradation. Modulates HMGA1 DNA-binding affinity. In response to high glucose, triggers phosphorylation-mediated subnuclear localization shifting of PDX1. Involved in the regulation of eye size, lens formation and retinal lamination during late embryogenesis. The chain is Homeodomain-interacting protein kinase 2 (Hipk2) from Mesocricetus auratus (Golden hamster).